A 138-amino-acid polypeptide reads, in one-letter code: MLQPARTKFRKQHKGRNTGIATRGAKVSFGEFGLKAIGRGRLTSRQIEAARRAMTRHIKRGGRIWIRVFPDKPVSQKPAEVRMGKGKGNPEYYVAEIQPGKMLYEMDGVDESLAREAFRLAAAKLPMQTTFVIRHLGS.

It belongs to the universal ribosomal protein uL16 family. As to quaternary structure, part of the 50S ribosomal subunit.

Binds 23S rRNA and is also seen to make contacts with the A and possibly P site tRNAs. The chain is Large ribosomal subunit protein uL16 from Nitrosomonas europaea (strain ATCC 19718 / CIP 103999 / KCTC 2705 / NBRC 14298).